Consider the following 433-residue polypeptide: Probable M18 family aminopeptidase 2 (433 aa).

3 residues coordinate Zn(2+): H79, H153, and H404.

The protein belongs to the peptidase M18 family. It depends on Zn(2+) as a cofactor.

This chain is Probable M18 family aminopeptidase 2, found in Mycobacterium tuberculosis (strain ATCC 25177 / H37Ra).